The sequence spans 383 residues: S-(hydroxymethyl)glutathione dehydrogenase (383 aa).

Cys-51 is a binding site for Zn(2+). His-52 provides a ligand contact to NAD(+). Positions 73, 74, 103, 106, 109, 117, and 180 each coordinate Zn(2+). Residues 205–210 (GAGCVG), Asp-229, and 298–300 (IGV) each bind NAD(+).

Belongs to the zinc-containing alcohol dehydrogenase family. Class-III subfamily. Zn(2+) serves as cofactor.

It carries out the reaction a primary alcohol + NAD(+) = an aldehyde + NADH + H(+). The enzyme catalyses a secondary alcohol + NAD(+) = a ketone + NADH + H(+). It catalyses the reaction S-(hydroxymethyl)glutathione + NADP(+) = S-formylglutathione + NADPH + H(+). The catalysed reaction is S-(hydroxymethyl)glutathione + NAD(+) = S-formylglutathione + NADH + H(+). It carries out the reaction S-nitrosoglutathione + NADH + H(+) = S-(hydroxysulfenamide)glutathione + NAD(+). Oxidizes long-chain alcohols and, in the presence of glutathione, is able to oxidize formaldehyde. Also acts as a S-nitroso-glutathione reductase by catalyzing the NADH-dependent reduction of S-nitrosoglutathione, thereby regulating protein S-nitrosylation. The chain is S-(hydroxymethyl)glutathione dehydrogenase (FDH1) from Aspergillus oryzae (strain ATCC 42149 / RIB 40) (Yellow koji mold).